Reading from the N-terminus, the 176-residue chain is Small ribosomal subunit protein uS4 (176 aa).

Residues 103-165 enclose the S4 RNA-binding domain; sequence RRLQTIVYKK…PTSPYAKRRL (63 aa).

Belongs to the universal ribosomal protein uS4 family. Part of the 30S ribosomal subunit. Contacts protein S5. The interaction surface between S4 and S5 is involved in control of translational fidelity.

In terms of biological role, one of the primary rRNA binding proteins, it binds directly to 16S rRNA where it nucleates assembly of the body of the 30S subunit. Its function is as follows. With S5 and S12 plays an important role in translational accuracy. The sequence is that of Small ribosomal subunit protein uS4 from Hyperthermus butylicus (strain DSM 5456 / JCM 9403 / PLM1-5).